Here is a 421-residue protein sequence, read N- to C-terminus: D-inositol 3-phosphate glycosyltransferase (421 aa).

H13 is a 1D-myo-inositol 3-phosphate binding site. Residues 19 to 20 and G27 each bind UDP-N-acetyl-alpha-D-glucosamine; that span reads QP. 1D-myo-inositol 3-phosphate is bound by residues 24–29, K82, Y115, T139, and R159; that span reads DAGGMN. Residues R233, K238, and V294 each contribute to the UDP-N-acetyl-alpha-D-glucosamine site. Mg(2+)-binding residues include F303, R304, and A306. UDP-N-acetyl-alpha-D-glucosamine-binding residues include E316 and E324. Mg(2+) is bound at residue T330.

The protein belongs to the glycosyltransferase group 1 family. MshA subfamily. In terms of assembly, homodimer.

The catalysed reaction is 1D-myo-inositol 3-phosphate + UDP-N-acetyl-alpha-D-glucosamine = 1D-myo-inositol 2-acetamido-2-deoxy-alpha-D-glucopyranoside 3-phosphate + UDP + H(+). Functionally, catalyzes the transfer of a N-acetyl-glucosamine moiety to 1D-myo-inositol 3-phosphate to produce 1D-myo-inositol 2-acetamido-2-deoxy-glucopyranoside 3-phosphate in the mycothiol biosynthesis pathway. The sequence is that of D-inositol 3-phosphate glycosyltransferase from Arthrobacter sp. (strain FB24).